We begin with the raw amino-acid sequence, 316 residues long: Olfactory receptor 2K2 (316 aa).

Residues 1–20 are Extracellular-facing; it reads MQGENFTIWSIFFLEGFSQY. A glycan (N-linked (GlcNAc...) asparagine) is linked at Asn-5. A helical transmembrane segment spans residues 21–41; the sequence is PGLEVVLFVFSLVMYLTTLLG. The Cytoplasmic segment spans residues 42-65; sequence NSTLILITILDSRLKTPMYLFLGN. A helical transmembrane segment spans residues 66-86; sequence LSFMDICYTSASVPTLLVNLL. Topologically, residues 87–97 are extracellular; sequence SSQKTIIFSGC. The cysteines at positions 97 and 188 are disulfide-linked. Residues 98-118 traverse the membrane as a helical segment; the sequence is AVQMYLSLAMGSTECVLLAVM. Residues 119-143 lie on the Cytoplasmic side of the membrane; it reads AYDRYVAICNPLRYSIIMNRCVCAR. Residues 144-164 traverse the membrane as a helical segment; it reads MATVSWVTGCLTALLETSFAL. Residues 165–199 lie on the Extracellular side of the membrane; the sequence is QIPLCGNLIDHFTCEILAVLKLACTSSLLMNTIML. A helical transmembrane segment spans residues 200–220; it reads VVSILLLPIPMLLVCISYIFI. At 221-238 the chain is on the cytoplasmic side; sequence LSTILRITSAEGRNKAFS. The helical transmembrane segment at 239-259 threads the bilayer; sequence TCGAHLTVVILYYGAALSMYL. Residues 260 to 270 lie on the Extracellular side of the membrane; that stretch reads KPSSSNAQKID. Residues 271 to 291 traverse the membrane as a helical segment; it reads KIISLLYGVLTPMLNPIIYSL. Residues 292–316 lie on the Cytoplasmic side of the membrane; the sequence is RNKEVKDAMKKLLGKITLHQTHEHL.

Belongs to the G-protein coupled receptor 1 family.

The protein localises to the cell membrane. Odorant receptor. The protein is Olfactory receptor 2K2 (OR2K2) of Homo sapiens (Human).